The sequence spans 426 residues: Histidine--tRNA ligase (426 aa).

Belongs to the class-II aminoacyl-tRNA synthetase family. In terms of assembly, homodimer.

Its subcellular location is the cytoplasm. It carries out the reaction tRNA(His) + L-histidine + ATP = L-histidyl-tRNA(His) + AMP + diphosphate + H(+). The polypeptide is Histidine--tRNA ligase (Streptococcus pyogenes serotype M1).